The following is a 301-amino-acid chain: 5'-3' exonuclease (301 aa).

In terms of domain architecture, 5'-3' exonuclease spans 182–264 (GYADLALLRG…RVAADVPLPD (83 aa)).

Its function is as follows. 5'-3' exonuclease acting preferentially on double-stranded DNA. This is 5'-3' exonuclease from Streptomyces coelicolor (strain ATCC BAA-471 / A3(2) / M145).